The chain runs to 212 residues: Large ribosomal subunit protein uL3 (212 aa).

The disordered stretch occupies residues 127–153 (FRGGPATHGQSDRHRAPGSIGSGTTPG).

Belongs to the universal ribosomal protein uL3 family. In terms of assembly, part of the 50S ribosomal subunit. Forms a cluster with proteins L14 and L19.

Its function is as follows. One of the primary rRNA binding proteins, it binds directly near the 3'-end of the 23S rRNA, where it nucleates assembly of the 50S subunit. This Herpetosiphon aurantiacus (strain ATCC 23779 / DSM 785 / 114-95) protein is Large ribosomal subunit protein uL3.